A 370-amino-acid polypeptide reads, in one-letter code: MRTISDLPVALVEEILSRVPLTSLSAVRSTCKTWNALSKTQIFGKTRQQFLGFMMIDFGLYSIKFDLQGLNYESDFVEPSIKRVSILDQLDIFKVFHCEGLLLCVFRGNRWPVVWNPYLGGTGWIQPISDFHKYQVSDKFAFGYENKNRNYKILRFLRYFFGFYDIYDLNSSAWKVLDVNPDCDIKCGVSLKGKTYFFAKEIAKAPNVKDFLVCFDFTAERFGPRLPLPFHSCGLFSEHVTLSCVRDEHLAVLYRRYNGVMEIYITTKIEPNEVFWSNFLKVDLTTFPDRFYGSRSHYFFIDEEKKVAVVFKNEPEWTMDCSYQTAYIIGKGGYLKSVKFGETPNDRKHNNAWNINSFMLSSYVPSLVQL.

In terms of domain architecture, F-box spans 1–46 (MRTISDLPVALVEEILSRVPLTSLSAVRSTCKTWNALSKTQIFGKT).

The sequence is that of F-box protein At1g66490 from Arabidopsis thaliana (Mouse-ear cress).